Here is a 573-residue protein sequence, read N- to C-terminus: 3-(3-hydroxy-phenyl)propionate/3-hydroxycinnamic acid hydroxylase (573 aa).

FAD contacts are provided by residues 18–47 and 283–293; these read DVVI…IVEE and FRKGRMFLAGD.

It belongs to the PheA/TfdB FAD monooxygenase family. FAD is required as a cofactor.

It carries out the reaction 3-(3-hydroxyphenyl)propanoate + NADH + O2 + H(+) = 3-(2,3-dihydroxyphenyl)propanoate + NAD(+) + H2O. The enzyme catalyses (2E)-3-(3-hydroxyphenyl)prop-2-enoate + NADH + O2 + H(+) = (2E)-3-(2,3-dihydroxyphenyl)prop-2-enoate + NAD(+) + H2O. The protein operates within aromatic compound metabolism; 3-phenylpropanoate degradation. Its function is as follows. Catalyzes the insertion of one atom of molecular oxygen into position 2 of the phenyl ring of 3-(3-hydroxyphenyl)propionate (3-HPP) and hydroxycinnamic acid (3HCI). The sequence is that of 3-(3-hydroxy-phenyl)propionate/3-hydroxycinnamic acid hydroxylase from Mycobacterium sp. (strain KMS).